The following is a 765-amino-acid chain: Phosphoribosylformylglycinamidine synthase subunit PurL (765 aa).

A compositionally biased stretch (polar residues) spans 1–13 (MTVSPTSAPTQAI). A disordered region spans residues 1–32 (MTVSPTSAPTQAIDTVERAATTPDEPQPFGEL). The active site involves His-65. ATP-binding residues include Tyr-68 and Lys-112. Glu-114 contributes to the Mg(2+) binding site. Substrate contacts are provided by residues 115 to 118 (SHNH) and Arg-137. Catalysis depends on His-116, which acts as the Proton acceptor. Asp-138 serves as a coordination point for Mg(2+). Residue Gln-263 coordinates substrate. Asp-291 contacts Mg(2+). 335 to 337 (ESQ) is a binding site for substrate. Asn-523 and Gly-560 together coordinate ATP. Asn-561 is a binding site for Mg(2+). Ser-563 serves as a coordination point for substrate.

The protein belongs to the FGAMS family. Monomer. Part of the FGAM synthase complex composed of 1 PurL, 1 PurQ and 2 PurS subunits.

Its subcellular location is the cytoplasm. It catalyses the reaction N(2)-formyl-N(1)-(5-phospho-beta-D-ribosyl)glycinamide + L-glutamine + ATP + H2O = 2-formamido-N(1)-(5-O-phospho-beta-D-ribosyl)acetamidine + L-glutamate + ADP + phosphate + H(+). It participates in purine metabolism; IMP biosynthesis via de novo pathway; 5-amino-1-(5-phospho-D-ribosyl)imidazole from N(2)-formyl-N(1)-(5-phospho-D-ribosyl)glycinamide: step 1/2. Functionally, part of the phosphoribosylformylglycinamidine synthase complex involved in the purines biosynthetic pathway. Catalyzes the ATP-dependent conversion of formylglycinamide ribonucleotide (FGAR) and glutamine to yield formylglycinamidine ribonucleotide (FGAM) and glutamate. The FGAM synthase complex is composed of three subunits. PurQ produces an ammonia molecule by converting glutamine to glutamate. PurL transfers the ammonia molecule to FGAR to form FGAM in an ATP-dependent manner. PurS interacts with PurQ and PurL and is thought to assist in the transfer of the ammonia molecule from PurQ to PurL. In Mycolicibacterium paratuberculosis (strain ATCC BAA-968 / K-10) (Mycobacterium paratuberculosis), this protein is Phosphoribosylformylglycinamidine synthase subunit PurL.